A 502-amino-acid chain; its full sequence is Probable cytosol aminopeptidase (502 aa).

The Mn(2+) site is built by K269 and D274. Residue K281 is part of the active site. Residues D292, D351, and E353 each contribute to the Mn(2+) site. Residue R355 is part of the active site.

It belongs to the peptidase M17 family. Mn(2+) serves as cofactor.

It is found in the cytoplasm. It catalyses the reaction Release of an N-terminal amino acid, Xaa-|-Yaa-, in which Xaa is preferably Leu, but may be other amino acids including Pro although not Arg or Lys, and Yaa may be Pro. Amino acid amides and methyl esters are also readily hydrolyzed, but rates on arylamides are exceedingly low.. The catalysed reaction is Release of an N-terminal amino acid, preferentially leucine, but not glutamic or aspartic acids.. Its function is as follows. Presumably involved in the processing and regular turnover of intracellular proteins. Catalyzes the removal of unsubstituted N-terminal amino acids from various peptides. This is Probable cytosol aminopeptidase from Shewanella frigidimarina (strain NCIMB 400).